Reading from the N-terminus, the 248-residue chain is 2,3-bisphosphoglycerate-dependent phosphoglycerate mutase (248 aa).

Residues 7-14 (RHGESIWN), 20-21 (TG), R59, 86-89 (ERHY), K97, 113-114 (RR), and 182-183 (GN) contribute to the substrate site. The active-site Tele-phosphohistidine intermediate is H8. The active-site Proton donor/acceptor is E86.

Belongs to the phosphoglycerate mutase family. BPG-dependent PGAM subfamily.

The catalysed reaction is (2R)-2-phosphoglycerate = (2R)-3-phosphoglycerate. Its pathway is carbohydrate degradation; glycolysis; pyruvate from D-glyceraldehyde 3-phosphate: step 3/5. Catalyzes the interconversion of 2-phosphoglycerate and 3-phosphoglycerate. The protein is 2,3-bisphosphoglycerate-dependent phosphoglycerate mutase of Methylacidiphilum infernorum (isolate V4) (Methylokorus infernorum (strain V4)).